The primary structure comprises 248 residues: Mannose-binding protein C (248 aa).

Positions 1–20 (MSLFPSLPLLLLSVVATSYS) are cleaved as a signal peptide. A Collagen-like domain is found at 42–99 (GINGFPGKDGRDGTKGEKGEPGQGLRGLQGPPGKLGPPGNPGPSGSPGPKGQKGDPGE). The tract at residues 43–111 (INGFPGKDGR…DCDSSLAASE (69 aa)) is disordered. Pro-47 carries the post-translational modification 4-hydroxyproline. Basic and acidic residues predominate over residues 49–61 (KDGRDGTKGEKGE). 4-hydroxyproline is present on residues Pro-73, Pro-79, Pro-82, and Pro-88. The span at 75-87 (KLGPPGNPGPSGS) shows a compositional bias: pro residues. Residues 112-130 (RKALQTEMAHIKKWLTFSL) are a coiled coil. Positions 134-245 (VGNKFFLTNG…CSSSHLALCE (112 aa)) constitute a C-type lectin domain. 2 disulfide bridges follow: Cys-155/Cys-244 and Cys-222/Cys-236.

In terms of assembly, oligomeric complex of 3 or more homotrimers. Interacts with MASP1 and MASP2. Interacts with MEP1A and MEP1B and may inhibit their catalytic activity. In terms of processing, hydroxylation on proline residues within the sequence motif, GXPG, is most likely to be 4-hydroxy as this fits the requirement for 4-hydroxylation in vertebrates.

It localises to the secreted. Its function is as follows. Calcium-dependent lectin involved in innate immune defense. Binds mannose, fucose and N-acetylglucosamine on different microorganisms and activates the lectin complement pathway. Binds to late apoptotic cells, as well as to apoptotic blebs and to necrotic cells, but not to early apoptotic cells, facilitating their uptake by macrophages. This is Mannose-binding protein C (MBL2) from Trachypithecus obscurus (Dusky leaf-monkey).